A 111-amino-acid chain; its full sequence is Universal stress protein B (111 aa).

The next 2 helical transmembrane spans lie at 1 to 21 (MIST…NMAR) and 90 to 110 (FILT…LMIW).

This sequence belongs to the universal stress protein B family.

It is found in the cell inner membrane. This Cronobacter sakazakii (strain ATCC BAA-894) (Enterobacter sakazakii) protein is Universal stress protein B.